Reading from the N-terminus, the 376-residue chain is Guanine nucleotide-binding protein G(s) subunit alpha (376 aa).

A lipid anchor (N-palmitoyl glycine) is attached at glycine 2. Cysteine 3 carries S-palmitoyl cysteine lipidation. Residues 36–376 (GTHRLLLLGA…RMHLRQYELL (341 aa)) form the G-alpha domain. The tract at residues 39-52 (RLLLLGAGESGKST) is G1 motif. GTP is bound by residues 44-51 (GAGESGKS), 180-186 (LRCRVLT), 205-209 (DVGGQ), 274-277 (NKQD), and alanine 348. Positions 51 and 186 each coordinate Mg(2+). The segment at 178 to 186 (DILRCRVLT) is G2 motif. The tract at residues 201–210 (FHMFDVGGQR) is G3 motif. The interval 270 to 277 (ILFLNKQD) is G4 motif. The interval 346–351 (TCAVDT) is G5 motif.

Belongs to the G-alpha family. G(s) subfamily. G proteins are composed of 3 units; alpha, beta and gamma. The alpha chain contains the guanine nucleotide binding site.

In terms of biological role, guanine nucleotide-binding proteins (G proteins) are involved as modulators or transducers in various transmembrane signaling systems. The G(s) protein is involved in hormonal regulation of adenylate cyclase: it activates the cyclase in response to beta-adrenergic stimuli. The sequence is that of Guanine nucleotide-binding protein G(s) subunit alpha from Lymnaea stagnalis (Great pond snail).